The primary structure comprises 124 residues: UPF0342 protein DSY2926 (124 aa).

This sequence belongs to the UPF0342 family.

The sequence is that of UPF0342 protein DSY2926 from Desulfitobacterium hafniense (strain Y51).